Reading from the N-terminus, the 465-residue chain is Serine/threonine-protein kinase 38 (465 aa).

Ala-2 is subject to N-acetylalanine. Residues 62–87 form an interaction with S100B region; it reads KRLRRSAHARKETEFLRLKRTRLGLE. Thr-74 carries the post-translational modification Phosphothreonine. A Protein kinase domain is found at 89–382; the sequence is FESLKVIGRG…VEEIKNNLFF (294 aa). Residues 95 to 103 and Lys-118 each bind ATP; that span reads IGRGAFGEV. The active-site Proton acceptor is the Asp-212. Phosphoserine is present on Ser-264. A Phosphoserine; by autocatalysis modification is found at Ser-281. The short motif at 306 to 311 is the UFM1-interacting motif (UFIM) element; that stretch reads WSLGVI. In terms of domain architecture, AGC-kinase C-terminal spans 383–455; it reads EGVDWEHIRE…KRFEGLTARG (73 aa). Thr-444 is subject to Phosphothreonine; by STK24/MST3.

Belongs to the protein kinase superfamily. AGC Ser/Thr protein kinase family. As to quaternary structure, homodimeric S100B binds two molecules of STK38. Interacts with MOB1 and MOB2. Interacts with MAP3K1 and MAP3K2 (via the kinase catalytic domain). Forms a tripartite complex with MOBKL1B and STK3/MST2. Interacts with MICAL1; leading to inhibit the protein kinase activity by antagonizing activation by MST1/STK4. Mg(2+) is required as a cofactor. In terms of processing, ISGylated. Post-translationally, phosphorylated by STK3/MST2 and this is enhanced by MOBKL1B. Expressed at high levels in spleen, lung, thymus, brain and fat tissue.

It is found in the nucleus. The protein resides in the cytoplasm. It localises to the chromosome. It carries out the reaction L-seryl-[protein] + ATP = O-phospho-L-seryl-[protein] + ADP + H(+). It catalyses the reaction L-threonyl-[protein] + ATP = O-phospho-L-threonyl-[protein] + ADP + H(+). With respect to regulation, activated by binding of S100B which releases autoinhibitory N-lobe interactions, enabling ATP to bind and the autophosphorylation of Ser-281. Thr-444 then undergoes calcium-dependent phosphorylation by STK24/MST3. Interactions between phosphorylated Thr-444 and the N-lobe promote additional structural changes that complete the activation of the kinase. Autoinhibition is also released by the binding of MOB1/MOBKL1A and MOB2/HCCA2 to the N-terminal of STK38. In terms of biological role, serine/threonine-protein kinase that acts as a negative regulator of MAP3K1/2 signaling. Converts MAP3K2 from its phosphorylated form to its non-phosphorylated form and inhibits autophosphorylation of MAP3K2. Acts as an ufmylation 'reader' in a kinase-independent manner: specifically recognizes and binds mono-ufmylated histone H4 in response to DNA damage, promoting the recruitment of SUV39H1 to the double-strand breaks, resulting in ATM activation. This is Serine/threonine-protein kinase 38 from Mus musculus (Mouse).